The sequence spans 511 residues: MATVQEKAAALNLSALHSPAHRPPGFSVAQKPFGATYVWSSIINTLQTQVEVKKRRHRLKRHNDCFVGSEAVDVIFSHLIQNKYFGDVDIPRAKVVRVCQALMDYKVFEAVPTKVFGKDKKPTFEDSSCSLYRFTTIPNQDSQSGRVNKLYSPARYADALFKSSDIKSASLEDLWENLSLKPANSPHVNISATLSPQVINEVWQEETIGRLLQLVDLPLLDSLLKQQEAVPKVPQPKRQSTIVNSSNYLDRGILKAYSDSQEDEWLSAAIDCLEYLPDQMVVEISRSFPEQPDRTDLVKELLFDAIGRYYSSREPLLNHLSDVHNGIAELLVNGKTEIALEATQLLLKLLDFQNREEFRRLLYFMAVAANPSEFKLQKESDNRMIVKRIFSKAIVDNKNLSKGKTDLLVLFLMDHQKDVFKIPGTLHKIVSVKLMAIQNGRDPNRDAGYIYCQRIEQRDYSNNTEKTTKDELLNLLKTIDEDSKLSAKEKKKLLGQFYKCHPDIFIEHFGD.

The 91-residue stretch at 46 to 136 folds into the DEP domain; it reads LQTQVEVKKR…SSCSLYRFTT (91 aa).

It belongs to the DEPDC7 family.

The polypeptide is DEP domain-containing protein 7 (DEPDC7) (Pongo abelii (Sumatran orangutan)).